Consider the following 207-residue polypeptide: Large ribosomal subunit protein uL4 (207 aa).

The interval 44–85 (MRQGTHKTKNRAEVSGGGRKPWRQKGTGRARQGSIRSPQWRG) is disordered.

Belongs to the universal ribosomal protein uL4 family. In terms of assembly, part of the 50S ribosomal subunit.

Functionally, one of the primary rRNA binding proteins, this protein initially binds near the 5'-end of the 23S rRNA. It is important during the early stages of 50S assembly. It makes multiple contacts with different domains of the 23S rRNA in the assembled 50S subunit and ribosome. Its function is as follows. Forms part of the polypeptide exit tunnel. The polypeptide is Large ribosomal subunit protein uL4 (Geobacillus thermodenitrificans (strain NG80-2)).